A 143-amino-acid polypeptide reads, in one-letter code: Nucleoside diphosphate kinase (143 aa).

Residues Lys11, Phe59, Arg87, Thr93, Arg104, and Asn114 each contribute to the ATP site. The active-site Pros-phosphohistidine intermediate is His117.

It belongs to the NDK family. As to quaternary structure, homotetramer. Mg(2+) serves as cofactor.

Its subcellular location is the cytoplasm. The enzyme catalyses a 2'-deoxyribonucleoside 5'-diphosphate + ATP = a 2'-deoxyribonucleoside 5'-triphosphate + ADP. It catalyses the reaction a ribonucleoside 5'-diphosphate + ATP = a ribonucleoside 5'-triphosphate + ADP. In terms of biological role, major role in the synthesis of nucleoside triphosphates other than ATP. The ATP gamma phosphate is transferred to the NDP beta phosphate via a ping-pong mechanism, using a phosphorylated active-site intermediate. This chain is Nucleoside diphosphate kinase, found in Enterobacter sp. (strain 638).